The following is a 346-amino-acid chain: Biotin synthase (346 aa).

In terms of domain architecture, Radical SAM core spans 38–256 (QQVQVSTLLS…IAVARIMMPT (219 aa)). [4Fe-4S] cluster contacts are provided by cysteine 53, cysteine 57, and cysteine 60. 4 residues coordinate [2Fe-2S] cluster: cysteine 97, cysteine 128, cysteine 188, and arginine 260.

The protein belongs to the radical SAM superfamily. Biotin synthase family. Homodimer. Requires [4Fe-4S] cluster as cofactor. [2Fe-2S] cluster serves as cofactor.

The enzyme catalyses (4R,5S)-dethiobiotin + (sulfur carrier)-SH + 2 reduced [2Fe-2S]-[ferredoxin] + 2 S-adenosyl-L-methionine = (sulfur carrier)-H + biotin + 2 5'-deoxyadenosine + 2 L-methionine + 2 oxidized [2Fe-2S]-[ferredoxin]. The protein operates within cofactor biosynthesis; biotin biosynthesis; biotin from 7,8-diaminononanoate: step 2/2. Functionally, catalyzes the conversion of dethiobiotin (DTB) to biotin by the insertion of a sulfur atom into dethiobiotin via a radical-based mechanism. The sequence is that of Biotin synthase from Citrobacter koseri (strain ATCC BAA-895 / CDC 4225-83 / SGSC4696).